We begin with the raw amino-acid sequence, 430 residues long: Uric acid permease PucK (430 aa).

14 consecutive transmembrane segments (helical) span residues Met-18–Leu-38, Leu-43–Trp-63, Tyr-67–Ile-87, Ala-97–Gly-117, Phe-122–Thr-142, Leu-163–Ile-183, Ser-185–Val-205, Glu-209–Phe-229, Ala-233–Phe-253, Ala-274–Ser-294, Val-310–Leu-330, Val-333–Tyr-353, Leu-369–Phe-389, and Val-398–Phe-418.

This sequence belongs to the nucleobase:cation symporter-2 (NCS2) (TC 2.A.40) family.

The protein localises to the cell membrane. Its function is as follows. Uptake of uric acid. The chain is Uric acid permease PucK (pucK) from Bacillus subtilis (strain 168).